The sequence spans 466 residues: Ornithine decarboxylase (466 aa).

Lys-116 carries the post-translational modification N6-(pyridoxal phosphate)lysine. Pyridoxal 5'-phosphate is bound by residues Ser-247, Gly-286, and 318–321; that span reads EPGR. Residue 362-363 participates in substrate binding; it reads FD. Residue Cys-411 is the Proton donor; shared with dimeric partner of the active site. Asp-412 contributes to the substrate binding site. Tyr-441 contacts pyridoxal 5'-phosphate.

It belongs to the Orn/Lys/Arg decarboxylase class-II family. In terms of assembly, homodimer. Only the dimer is catalytically active, as the active sites are constructed of residues from both monomers. Pyridoxal 5'-phosphate serves as cofactor.

It is found in the cytoplasm. The enzyme catalyses L-ornithine + H(+) = putrescine + CO2. Its pathway is amine and polyamine biosynthesis; putrescine biosynthesis via L-ornithine pathway; putrescine from L-ornithine: step 1/1. Inhibited by antizyme (AZ) OAZ1 in response to polyamine levels. AZ inhibits the assembly of the functional homodimer by binding to ODC monomers and targeting them for ubiquitin-independent proteolytic destruction by the 26S proteasome. Functionally, catalyzes the first and rate-limiting step of polyamine biosynthesis that converts ornithine into putrescine, which is the precursor for the polyamines, spermidine and spermine. Polyamines are essential for cell proliferation and are implicated in cellular processes, ranging from DNA replication to apoptosis. The protein is Ornithine decarboxylase of Saccharomyces cerevisiae (strain ATCC 204508 / S288c) (Baker's yeast).